The following is a 431-amino-acid chain: Enolase (431 aa).

Q164 is a binding site for (2R)-2-phosphoglycerate. Catalysis depends on E206, which acts as the Proton donor. Mg(2+) contacts are provided by D243, E286, and D313. K338, R367, S368, and K389 together coordinate (2R)-2-phosphoglycerate. The active-site Proton acceptor is K338.

It belongs to the enolase family. It depends on Mg(2+) as a cofactor.

Its subcellular location is the cytoplasm. It is found in the secreted. It localises to the cell surface. It carries out the reaction (2R)-2-phosphoglycerate = phosphoenolpyruvate + H2O. It participates in carbohydrate degradation; glycolysis; pyruvate from D-glyceraldehyde 3-phosphate: step 4/5. Its function is as follows. Catalyzes the reversible conversion of 2-phosphoglycerate (2-PG) into phosphoenolpyruvate (PEP). It is essential for the degradation of carbohydrates via glycolysis. The sequence is that of Enolase from Chloroflexus aggregans (strain MD-66 / DSM 9485).